Consider the following 346-residue polypeptide: MLSVYSDDHRLHFGQSELVDGKLQPCFEMPSRADTVLARVKSQNLGEVIAPKDFGREPLLRLHDAAYLDFLQGAWARWTAEGHSGDLVSTTFPGRRLRRDGPIPTALMGELGYYSFDTEAPITAGTWQAIYSSAQVALTAQEHMRQGARSAFALCRPPGHHAGGDFMGGYCFLNNAAIATQAFLDQGARRVAILDVDYHHGNGTQDIFYRRDDVLFASIHGDPRVEYPYFLGYADERGEGAGEGCNHNYPLAHGSGWDLWSAALDDACVRIAGYAPDALVISLGVDTYKEDPISQFRLDSPDYLRMGERIARLGLPTLFIMEGGYAVEAIGINAVNVLQGYEGAAR.

Catalysis depends on His161, which acts as the Proton donor/acceptor. Residues Asp197, His199, and Asp286 each coordinate Zn(2+).

The protein belongs to the histone deacetylase family. As to quaternary structure, homodimer. Zn(2+) serves as cofactor.

It carries out the reaction N-acetylputrescine + H2O = putrescine + acetate. The catalysed reaction is N-acetylcadaverine + H2O = cadaverine + acetate. It catalyses the reaction N(1)-acetylspermine + H2O = spermine + acetate. The enzyme catalyses N(1)-acetylspermidine + H2O = spermidine + acetate. The protein operates within amine and polyamine metabolism. Catalyzes the deacetylation of acetylated polyamines such as N-acetylputrescine, N-acetylcadaverine, N(1)-acetylspermine and N(1)-acetylspermidine. Plays an important role in the metabolism of acetylated polyamines in P.aeruginosa. Is involved in the degradation pathways of N-acetylputrescine and N-acetylcadaverine, that allow P.aeruginosa to utilize these acetylpolyamines as a carbon source under glucose starvation. In vitro, can also hydrolyze artificial trifluoroacetylated and acetylated lysine-derivatives. The polypeptide is Acetylpolyamine amidohydrolase 1 (Pseudomonas aeruginosa (strain ATCC 15692 / DSM 22644 / CIP 104116 / JCM 14847 / LMG 12228 / 1C / PRS 101 / PAO1)).